The following is a 355-amino-acid chain: MAKKPALSPQEFRSEALATALTTIERKHGQGAVMRLEDSAHVKIPAIPTGSIGLDLALGIGGIPKGRITEIYGPESSGKTTLALHIIAESQKLGGTAAFIDAEHALDVNYARRLGVNTPEMLISQPDFGEQALDIADLLVRSGAVDVVVIDSVAALIPQAELEGEMGETQVGGQARLMSHAMRKLTGTIHKSQTSVIFINQIRMKIGMTGYGSPETTTGGNALKFYASVRLDIRRIQTLKDKEETYGSRCRVKVVKNKVAPPFREALFDILYGTGVSREGELIDMGVEAGIVDKSGAWFAFGSERLGQGRDNVRAFLQEHTDIRDQIEGKLREHLGFAEYVPPPSPEVMEEEDGM.

An ATP-binding site is contributed by 73 to 80 (GPESSGKT).

This sequence belongs to the RecA family.

It is found in the cytoplasm. Functionally, can catalyze the hydrolysis of ATP in the presence of single-stranded DNA, the ATP-dependent uptake of single-stranded DNA by duplex DNA, and the ATP-dependent hybridization of homologous single-stranded DNAs. It interacts with LexA causing its activation and leading to its autocatalytic cleavage. This is Protein RecA from Solidesulfovibrio magneticus (strain ATCC 700980 / DSM 13731 / RS-1) (Desulfovibrio magneticus).